We begin with the raw amino-acid sequence, 297 residues long: Ribonuclease H2 subunit A (297 aa).

Positions 21–248 constitute an RNase H type-2 domain; that stretch reads PCVLGIDEAG…ASTIVEKRCV (228 aa). A divalent metal cation-binding residues include Asp-27, Glu-28, and Asp-138.

This sequence belongs to the RNase HII family. Eukaryotic subfamily. Mn(2+) serves as cofactor. Requires Mg(2+) as cofactor.

The enzyme catalyses Endonucleolytic cleavage to 5'-phosphomonoester.. In terms of biological role, catalytic subunit of RNase HII, an endonuclease that specifically degrades the RNA of RNA:DNA hybrids. Participates in DNA replication, possibly by mediating the removal of lagging-strand Okazaki fragment RNA primers during DNA replication. Mediates the excision of single ribonucleotides from DNA:RNA duplexes. This chain is Ribonuclease H2 subunit A (rnh-2), found in Caenorhabditis elegans.